The sequence spans 870 residues: Rho GTPase-activating protein 7 (870 aa).

The region spanning 18–125 is the PH domain; that stretch reads TVFKSGPLFI…WKTALEQALA (108 aa). The Rho-GAP domain occupies 167-367; that stretch reads LALEDIDGSP…VLLEDYGSIF (201 aa). Disordered stretches follow at residues 378 to 432 and 446 to 465; these read STES…SGCT and DSDI…SNIR. Residues 407–417 show a composition bias toward acidic residues; sequence NEVEPVTDDDN. A coiled-coil region spans residues 569-693; it reads GEDELAIQRL…HQLNQQRQTH (125 aa). Residues 736-793 form a disordered region; it reads HEENVLGAEWRNSKGAGSFGVGNSRQPSRKQIPESTNTTDSKISEESGKISVDKLSSI. Basic and acidic residues predominate over residues 777–787; it reads KISEESGKISV.

Acts as a GTPase activator for the Rac-type GTPase by converting it to an inactive GDP-bound state. The protein is Rho GTPase-activating protein 7 (ROPGAP7) of Arabidopsis thaliana (Mouse-ear cress).